Here is a 413-residue protein sequence, read N- to C-terminus: Arginine biosynthesis bifunctional protein ArgJ (413 aa).

6 residues coordinate substrate: Thr160, Lys186, Thr197, Glu284, Asn408, and Ser413. The Nucleophile role is filled by Thr197.

This sequence belongs to the ArgJ family. As to quaternary structure, heterotetramer of two alpha and two beta chains.

It localises to the cytoplasm. The catalysed reaction is N(2)-acetyl-L-ornithine + L-glutamate = N-acetyl-L-glutamate + L-ornithine. It catalyses the reaction L-glutamate + acetyl-CoA = N-acetyl-L-glutamate + CoA + H(+). It functions in the pathway amino-acid biosynthesis; L-arginine biosynthesis; L-ornithine and N-acetyl-L-glutamate from L-glutamate and N(2)-acetyl-L-ornithine (cyclic): step 1/1. It participates in amino-acid biosynthesis; L-arginine biosynthesis; N(2)-acetyl-L-ornithine from L-glutamate: step 1/4. Functionally, catalyzes two activities which are involved in the cyclic version of arginine biosynthesis: the synthesis of N-acetylglutamate from glutamate and acetyl-CoA as the acetyl donor, and of ornithine by transacetylation between N(2)-acetylornithine and glutamate. The chain is Arginine biosynthesis bifunctional protein ArgJ from Burkholderia mallei (strain ATCC 23344).